A 311-amino-acid polypeptide reads, in one-letter code: Protease HtpX homolog 1 (311 aa).

A run of 2 helical transmembrane segments spans residues 12-32 (IIAL…IINF) and 35-55 (FPVI…WLIS). His137 provides a ligand contact to Zn(2+). Glu138 is an active-site residue. Position 141 (His141) interacts with Zn(2+). Transmembrane regions (helical) follow at residues 159-179 (ILGF…IFAV) and 184-204 (ILVG…TFFL). Residue Glu216 coordinates Zn(2+).

It belongs to the peptidase M48B family. Requires Zn(2+) as cofactor.

It localises to the cell membrane. In Sulfurisphaera tokodaii (strain DSM 16993 / JCM 10545 / NBRC 100140 / 7) (Sulfolobus tokodaii), this protein is Protease HtpX homolog 1.